The sequence spans 201 residues: Peptidyl-tRNA hydrolase (201 aa).

Tyr14 provides a ligand contact to tRNA. Residue His19 is the Proton acceptor of the active site. TRNA-binding residues include Tyr64, Asn66, and Asn112.

This sequence belongs to the PTH family. Monomer.

It localises to the cytoplasm. The enzyme catalyses an N-acyl-L-alpha-aminoacyl-tRNA + H2O = an N-acyl-L-amino acid + a tRNA + H(+). Hydrolyzes ribosome-free peptidyl-tRNAs (with 1 or more amino acids incorporated), which drop off the ribosome during protein synthesis, or as a result of ribosome stalling. In terms of biological role, catalyzes the release of premature peptidyl moieties from peptidyl-tRNA molecules trapped in stalled 50S ribosomal subunits, and thus maintains levels of free tRNAs and 50S ribosomes. The protein is Peptidyl-tRNA hydrolase of Rhodopseudomonas palustris (strain BisB18).